We begin with the raw amino-acid sequence, 362 residues long: Forkhead box protein F (362 aa).

A disordered region spans residues 19–70 (LDSTAPNNSHRTIKAENYFNEDEEDYNENSHEDSEDSKEDSDGQGCRSRKRK). Residues 37-57 (FNEDEEDYNENSHEDSEDSKE) are compositionally biased toward acidic residues. Positions 72 to 169 (KPPFSYIALI…EENGFRRRPR (98 aa)) form a DNA-binding region, fork-head.

The protein localises to the nucleus. Its function is as follows. Transcription factor that is required for cell fate of coelomocytes which are non-muscle mesodermal cells. Acts in concert with, and by activating expression of, the homeodomain gene ceh-34. Binds to the sequence motif 5'-ATAAA[T/C]A-3'. In Caenorhabditis elegans, this protein is Forkhead box protein F.